The primary structure comprises 396 residues: Cyclic GMP-AMP synthase-like receptor (396 aa).

Residues Ser63 and 75–77 contribute to the ATP site; that span reads EFD. The Mg(2+) site is built by Glu75, Asp77, and Asp194. Position 194 (Asp194) interacts with GTP. Residues 241 to 244, Lys262, and 275 to 279 each bind ATP; these read QEQE and SYYLK. Mn(2+) is bound by residues Val286, Glu287, and Asp292. The interval 376-396 is disordered; that stretch reads IMNGGNPQQSANAENGSCLSM. Residues 380–396 show a composition bias toward polar residues; that stretch reads GNPQQSANAENGSCLSM.

The protein belongs to the mab-21 family. The cofactor is Mg(2+). Requires Mn(2+) as cofactor.

It catalyses the reaction GTP + ATP = 2',3'-cGAMP + 2 diphosphate. The enzyme catalyses GTP + ATP = pppGp(2'-5')A + diphosphate. It carries out the reaction pppGp(2'-5')A = 2',3'-cGAMP + diphosphate. Nucleotidyltransferase that catalyzes the formation of cyclic GMP-AMP (2',3'-cGAMP) from ATP and GTP and plays a key role in innate immunity. Acts as a key sensor of double-stranded RNA (dsRNA), the presence of dsRNA in the cytoplasm being a danger signal that triggers the immune responses. Directly binds dsRNA, activating the nucleotidyltransferase activity, leading to synthesis of 2',3'-cGAMP, a second messenger that binds to and activates Sting, thereby triggering the immune response via activation of the NF-kappa-B transcription factor. This Aethina tumida (Small hive beetle) protein is Cyclic GMP-AMP synthase-like receptor.